Reading from the N-terminus, the 453-residue chain is Gamma-aminobutyric acid receptor subunit alpha-6 (453 aa).

A signal peptide spans 1 to 19; sequence MLLLLPWLFSLLWIENAQA. The Extracellular segment spans residues 20–243; it reads QLEDEGNFYS…FHLQRKMGYF (224 aa). The N-linked (GlcNAc...) asparagine glycan is linked to Asn31. Arg84 contributes to the 4-aminobutanoate binding site. N-linked (GlcNAc...) asparagine glycosylation is found at Asn128 and Asn141. Thr147 is a binding site for 4-aminobutanoate. Residues Cys156 and Cys170 are joined by a disulfide bond. The helical transmembrane segment at 244–264 threads the bilayer; sequence MIQIYTPCIMTVILSQVSFWI. The Cytoplasmic portion of the chain corresponds to 265-270; it reads NKESVP. Residues 271–290 traverse the membrane as a helical segment; that stretch reads ARTVFGITTVLTMTTLSISA. The Extracellular portion of the chain corresponds to 291 to 304; it reads RHSLPKVSYATAMD. The chain crosses the membrane as a helical span at residues 305–325; sequence WFIAVCFAFVFSALIEFAAVN. Residues 326 to 422 lie on the Cytoplasmic side of the membrane; sequence YFTNLQSQKA…GTSKIDQYSR (97 aa). Phosphoserine is present on Ser375. The residue at position 403 (Thr403) is a Phosphothreonine. A helical transmembrane segment spans residues 423 to 443; that stretch reads ILFPVAFAGFNLVYWIVYLSK. The Extracellular segment spans residues 444–453; it reads DTMEVSSTVE.

This sequence belongs to the ligand-gated ion channel (TC 1.A.9) family. Gamma-aminobutyric acid receptor (TC 1.A.9.5) subfamily. GABRA6 sub-subfamily. As to quaternary structure, heteropentamer, formed by a combination of alpha (GABRA1-6), beta (GABRB1-3), gamma (GABRG1-3), delta (GABRD), epsilon (GABRE), rho (GABRR1-3), pi (GABRP) and theta (GABRQ) chains, each subunit exhibiting distinct physiological and pharmacological properties. Binds UBQLN1. As to expression, expressed in brain, in cerebellar granule cells.

It localises to the postsynaptic cell membrane. It is found in the cell membrane. The catalysed reaction is chloride(in) = chloride(out). Its function is as follows. Alpha subunit of the heteropentameric ligand-gated chloride channel gated by gamma-aminobutyric acid (GABA), a major inhibitory neurotransmitter in the brain. GABA-gated chloride channels, also named GABA(A) receptors (GABAAR), consist of five subunits arranged around a central pore and contain GABA active binding site(s) located at the alpha and beta subunit interface(s). When activated by GABA, GABAARs selectively allow the flow of chloride anions across the cell membrane down their electrochemical gradient. Alpha-6/GABRA6 subunits are found at both synaptic and extrasynaptic sites. Chloride influx into the postsynaptic neuron following GABAAR opening decreases the neuron ability to generate a new action potential, thereby reducing nerve transmission. Extrasynaptic alpha-6-containing receptors contribute to the tonic GABAergic inhibition. Alpha-6 subunits are also present on glutamatergic synapses. The sequence is that of Gamma-aminobutyric acid receptor subunit alpha-6 from Rattus norvegicus (Rat).